The primary structure comprises 381 residues: Succinyl-diaminopimelate desuccinylase (381 aa).

Zn(2+) is bound at residue histidine 72. The active site involves aspartate 74. Residue aspartate 103 coordinates Zn(2+). Residue glutamate 133 is the Proton acceptor of the active site. Positions 134, 163, and 348 each coordinate Zn(2+).

This sequence belongs to the peptidase M20A family. DapE subfamily. Homodimer. Zn(2+) serves as cofactor. Co(2+) is required as a cofactor.

The enzyme catalyses N-succinyl-(2S,6S)-2,6-diaminopimelate + H2O = (2S,6S)-2,6-diaminopimelate + succinate. Its pathway is amino-acid biosynthesis; L-lysine biosynthesis via DAP pathway; LL-2,6-diaminopimelate from (S)-tetrahydrodipicolinate (succinylase route): step 3/3. Its function is as follows. Catalyzes the hydrolysis of N-succinyl-L,L-diaminopimelic acid (SDAP), forming succinate and LL-2,6-diaminopimelate (DAP), an intermediate involved in the bacterial biosynthesis of lysine and meso-diaminopimelic acid, an essential component of bacterial cell walls. In Anaplasma marginale (strain Florida), this protein is Succinyl-diaminopimelate desuccinylase.